We begin with the raw amino-acid sequence, 92 residues long: Putative phosphotransferase enzyme IIB component SgcB (92 aa).

The PTS EIIB type-2 domain occupies 1-92; it reads MKKILVACGT…KQQIKALLTQ (92 aa). The Phosphocysteine intermediate role is filled by cysteine 8.

The protein resides in the cytoplasm. In terms of biological role, the phosphoenolpyruvate-dependent sugar phosphotransferase system (sugar PTS), a major carbohydrate active -transport system, catalyzes the phosphorylation of incoming sugar substrates concomitantly with their translocation across the cell membrane. In Escherichia coli (strain K12), this protein is Putative phosphotransferase enzyme IIB component SgcB (sgcB).